A 928-amino-acid chain; its full sequence is Zinc metalloproteinase nas-39 (928 aa).

An N-terminal signal peptide occupies residues 1–30; the sequence is MRFSANIAIIVNIIFLFIVVEFVLPTFIRS. One can recognise a Peptidase M12A domain in the interval 48-247; sequence AATAKKERIW…RQTKKLYKCA (200 aa). Residues Asn69 and Asn87 are each glycosylated (N-linked (GlcNAc...) asparagine). 4 disulfides stabilise this stretch: Cys90-Cys246, Cys111-Cys133, Cys113-Cys114, and Cys249-Cys268. Zn(2+) is bound at residue His141. The active site involves Glu142. Residues His145 and His151 each coordinate Zn(2+). CUB domains lie at 249–359 and 360–476; these read CGGT…YAIC and GGPI…FTKE. An N-linked (GlcNAc...) asparagine glycan is attached at Asn283. 6 disulfide bridges follow: Cys359–Cys385, Cys412–Cys439, Cys480–Cys491, Cys487–Cys500, Cys502–Cys515, and Cys519–Cys545. The region spanning 477 to 516 is the EGF-like 1; calcium-binding domain; that stretch reads LNECATDKNICHHYCVNTVGGFKCACRVGYSLSSNGFSCD. Residues 519–625 form the CUB 3 domain; that stretch reads CGGYLKASNG…DGFFANFIAD (107 aa). N-linked (GlcNAc...) asparagine glycans are attached at residues Asn527 and Asn560. 8 disulfides stabilise this stretch: Cys573–Cys587, Cys629–Cys640, Cys636–Cys649, Cys651–Cys664, Cys669–Cys695, Cys722–Cys744, Cys782–Cys812, and Cys840–Cys863. Positions 626–665 constitute an EGF-like 2; calcium-binding domain; sequence FDECQNDNAGCEHTCQNRLGSYVCTCNPGYILAEDKHNCK. CUB domains are found at residues 669–781 and 782–900; these read CFFE…YTSL and CGGR…YREA. Asn694 is a glycosylation site (N-linked (GlcNAc...) asparagine). The segment at 895–928 is disordered; it reads AEYREAPRSSSTKRTFVSKTRHSPLEEPIHDRNE. Over residues 902–912 the composition is skewed to polar residues; it reads RSSSTKRTFVS. The segment covering 917-928 has biased composition (basic and acidic residues); it reads SPLEEPIHDRNE.

Zn(2+) serves as cofactor. As to expression, expressed in pharyngeal, vulva and body wall muscles, intestine and several neurons.

It is found in the secreted. Functionally, metalloprotease. This chain is Zinc metalloproteinase nas-39, found in Caenorhabditis elegans.